The chain runs to 393 residues: Digeranylgeranylglycerophospholipid reductase (393 aa).

The FAD site is built by alanine 14, aspartate 33, cysteine 44, alanine 45, glycine 47, arginine 100, alanine 124, aspartate 280, glycine 292, and isoleucine 293.

It belongs to the geranylgeranyl reductase family. DGGGPL reductase subfamily. FAD is required as a cofactor.

It carries out the reaction a 2,3-bis-O-phytanyl-sn-glycerol 1-phospholipid + 8 A = a 2,3-bis-O-(geranylgeranyl)-sn-glycerol 1-phospholipid + 8 AH2. The catalysed reaction is 2,3-bis-O-(phytanyl)-sn-glycerol 1-phosphate + 8 A = 2,3-bis-O-(geranylgeranyl)-sn-glycerol 1-phosphate + 8 AH2. It catalyses the reaction CDP-2,3-bis-O-(geranylgeranyl)-sn-glycerol + 8 AH2 = CDP-2,3-bis-O-(phytanyl)-sn-glycerol + 8 A. The enzyme catalyses archaetidylserine + 8 AH2 = 2,3-bis-O-phytanyl-sn-glycero-3-phospho-L-serine + 8 A. It functions in the pathway membrane lipid metabolism; glycerophospholipid metabolism. Is involved in the reduction of 2,3-digeranylgeranylglycerophospholipids (unsaturated archaeols) into 2,3-diphytanylglycerophospholipids (saturated archaeols) in the biosynthesis of archaeal membrane lipids. Catalyzes the formation of archaetidic acid (2,3-di-O-phytanyl-sn-glyceryl phosphate) from 2,3-di-O-geranylgeranylglyceryl phosphate (DGGGP) via the hydrogenation of each double bond of the isoprenoid chains. Is also probably able to reduce double bonds of geranyl groups in CDP-2,3-bis-O-(geranylgeranyl)-sn-glycerol and archaetidylserine, thus acting at various stages in the biosynthesis of archaeal membrane lipids. This Methanobrevibacter smithii (strain ATCC 35061 / DSM 861 / OCM 144 / PS) protein is Digeranylgeranylglycerophospholipid reductase.